The primary structure comprises 303 residues: 2-dehydropantoate 2-reductase (303 aa).

Residues 7–12 (GPGSLG), Lys78, Asn103, and Ala129 contribute to the NADP(+) site. Lys185 acts as the Proton donor in catalysis. Residues Lys185, Asn189, Asn193, Asn203, and 252 to 255 (NESS) contribute to the substrate site. Residue Glu267 coordinates NADP(+).

This sequence belongs to the ketopantoate reductase family.

The protein resides in the cytoplasm. It catalyses the reaction (R)-pantoate + NAD(+) = 2-dehydropantoate + NADH + H(+). It carries out the reaction (R)-pantoate + NADP(+) = 2-dehydropantoate + NADPH + H(+). The protein operates within cofactor biosynthesis; coenzyme A biosynthesis. Catalyzes the NAD(P)H-dependent reduction of ketopantoate into pantoic acid. This chain is 2-dehydropantoate 2-reductase, found in Halobacterium salinarum (strain ATCC 700922 / JCM 11081 / NRC-1) (Halobacterium halobium).